The chain runs to 600 residues: Novobiocin biosynthesis protein H (600 aa).

The interval 505-526 is disordered; the sequence is GGKTDRAGLPDPVKATQPAGLG. In terms of domain architecture, Carrier spans 526–600; that stretch reads GPRTPAEKVL…QLAAIATLEE (75 aa). Residue serine 561 is modified to O-(pantetheine 4'-phosphoryl)serine.

Belongs to the ATP-dependent AMP-binding enzyme family.

Its pathway is antibiotic biosynthesis; novobiocin biosynthesis. Together with NovI, involved in the formation of a beta-OH-Tyr intermediate in the novobiocin biosynthesis pathway, an aminocoumarin family antibiotic that targets bacterial DNA gyrases. The ATP-dependent AMP-binding region activates L-Tyr as L-tyrosyl-AMP and then transfers the L-tyrosyl group to the acyl carrier domain through thioester formation to form a tyrosyl-S intermediate that is covalently tethered to NovH (L-Tyr-S-NovH). The polypeptide is Novobiocin biosynthesis protein H (novH) (Streptomyces niveus (Streptomyces spheroides)).